The primary structure comprises 289 residues: Porin (289 aa).

Homotrimer.

It is found in the cell outer membrane. Forms channels that allow the passive diffusion of small hydrophilic solutes up to an exclusion limit of about 0.6 kDa. In Fuscovulum blasticum (Rhodobacter blasticus), this protein is Porin (opmA).